A 269-amino-acid chain; its full sequence is Phosphonoacetaldehyde hydrolase (269 aa).

D10 serves as the catalytic Nucleophile. Residues D10 and A12 each coordinate Mg(2+). The active-site Schiff-base intermediate with substrate is the K52. Residue D186 participates in Mg(2+) binding.

Belongs to the HAD-like hydrolase superfamily. PhnX family. As to quaternary structure, homodimer. Requires Mg(2+) as cofactor.

The enzyme catalyses phosphonoacetaldehyde + H2O = acetaldehyde + phosphate + H(+). Involved in phosphonate degradation. The polypeptide is Phosphonoacetaldehyde hydrolase (Salmonella agona (strain SL483)).